The following is a 959-amino-acid chain: Protein SEY1 homolog 1 (959 aa).

Residues 1–767 (MQESDVFHNQ…ELAAITVHSK (767 aa)) lie on the Cytoplasmic side of the membrane. Residues 9-86 (NQLRVEMLKK…EEEKKEKENY (78 aa)) are a coiled coil. The disordered stretch occupies residues 62-81 (EEKENMKVEEEEIKEEEEKK). The 218-residue stretch at 123 to 340 (GFNYNMLSIL…NQNTYFRPIY (218 aa)) folds into the GB1/RHD3-type G domain. Residue 133–140 (GPQNSGKS) participates in GTP binding. The helical transmembrane segment at 768–788 (TPMWLILLIAFLSFDNIVYVF) threads the bilayer. The Lumenal segment spans residues 789 to 791 (KSP). A helical transmembrane segment spans residues 792–812 (TLLALTLIIIGIIYSLNKIGY). Residues 813 to 959 (AYLIDSVISY…LNKIKEANEF (147 aa)) lie on the Cytoplasmic side of the membrane. The interval 849 to 868 (EAPKRKRPQKKTQDDKPKSS) is disordered.

It belongs to the TRAFAC class dynamin-like GTPase superfamily. GB1/RHD3 GTPase family. RHD3 subfamily.

The protein resides in the endoplasmic reticulum membrane. Functionally, probable GTP-binding protein that may be involved in cell development. This is Protein SEY1 homolog 1 from Entamoeba histolytica (strain ATCC 30459 / HM-1:IMSS / ABRM).